Reading from the N-terminus, the 1778-residue chain is Nuclear receptor corepressor 1 (1778 aa).

Residues 125 to 176 enclose the SANT domain; it reads DRLEEWSPEERSLFKSRQADHVKIFHGLTEFFVDKTASDLVLFYYMNKKTED. The region spanning 356–398 is the Myb-like domain; that stretch reads WTDDEKTKLVTLINSSPTLDWVSISEGMNRRPNECKMQYDAMN. Residues 409–421 show a composition bias toward acidic residues; it reads VDEEDGNGQEEGG. Disordered stretches follow at residues 409–671, 992–1024, 1195–1218, 1276–1339, 1414–1434, and 1646–1718; these read VDEE…TVST, SLTP…AGRS, KLQQ…ATPQ, QHLQ…SRSV, PPKT…RTLS, and AAPT…PPLP. 2 stretches are compositionally biased toward low complexity: residues 431-442 and 450-469; these read SSAAARRSGLAR and TPRA…VTRA. Acidic residues predominate over residues 478-493; that stretch reads DLGEEIDEMEIEDNDE. Residues 494–513 show a composition bias toward basic and acidic residues; the sequence is DASRGSRGKDSKAPSDRDGS. Composition is skewed to acidic residues over residues 517 to 545 and 599 to 616; these read MEGD…EEEE and ESDD…DVDE. 2 stretches are compositionally biased toward low complexity: residues 626–639 and 649–671; these read SSSS…SVGG and LVQQ…TVST. The segment covering 1276-1285 has biased composition (low complexity); sequence QHLQQQQQHH. Over residues 1687-1696 the composition is skewed to low complexity; it reads SSVNSNVSDV.

The protein belongs to the N-CoR nuclear receptor corepressors family. In terms of assembly, interacts with gex-3. Interacts (via C-terminus) with nhr-60. In larvae, expressed in pharyngeal neurons, ventral and dorsal nerve cords, tail neurons, egg-laying neurons and egg-laying muscles. Detected in the neurons of the pharyngeal nerve ring, head neurons, tail neurons and egg-laying muscles in adults. Detected in male-specific tail ganglia and rays in males.

It is found in the nucleus. Its function is as follows. Mediates transcriptional repression by certain nuclear receptors. Plays a role in development and neuronal function. May play a role in muscle-specific oxidative mitochondrial metabolism. The sequence is that of Nuclear receptor corepressor 1 from Caenorhabditis elegans.